A 345-amino-acid polypeptide reads, in one-letter code: Protein-arginine kinase (345 aa).

Residues 15–245 (LVISSRIRLA…LQIINQEIIS (231 aa)) enclose the Phosphagen kinase C-terminal domain. ATP contacts are provided by residues 18–22 (SSRIR), His-82, Arg-116, 167–171 (RASVM), and 198–203 (RGLYGE). An RDXXRA motif of the pArg binding pocket involved in allosteric regulation motif is present at residues 328 to 333 (RDFNRA).

This sequence belongs to the ATP:guanido phosphotransferase family.

It catalyses the reaction L-arginyl-[protein] + ATP = N(omega)-phospho-L-arginyl-[protein] + ADP + H(+). Its activity is regulated as follows. Appears to be allosterically activated by the binding of pArg-containing polypeptides to the pArg-binding pocket localized in the C-terminal domain of McsB. Functionally, catalyzes the specific phosphorylation of arginine residues in proteins. The protein is Protein-arginine kinase of Clostridium kluyveri (strain NBRC 12016).